The chain runs to 500 residues: NAD(P)H-quinone oxidoreductase chain 4, chloroplastic (500 aa).

A run of 14 helical transmembrane segments spans residues 4-24 (FPWLTIIVVFPISAGSLMLFL), 35-55 (YTICICILELLITTYAFCYNF), 87-107 (IGTILLTGFITTLATLAAFPV), 113-130 (LFHFLMLAMYSGQIGSFS), 134-154 (LLLFFIMWELELIPVYLLLSM), 167-187 (FILYTAGSSIFLLIGVLGISL), 211-231 (ILFYIGFVIALTVKSPIIPLH), 242-262 (HYSTCMLLAGILLKMGAYGLV), 272-292 (AHSLFSPWLMAVGTIQIIYAA), 305-325 (IAYSSVSHMGFIIIGIGSITD), 330-350 (GAILQIISHGFIGAALFFLAG), 386-406 (LALPGMSGFVAELIVFFGIIT), 416-436 (ILIIFVMAIGIILTPIYLLSM), and 462-482 (LFLSISILLPIIGIGIYPDFV).

This sequence belongs to the complex I subunit 4 family.

The protein resides in the plastid. Its subcellular location is the chloroplast thylakoid membrane. It carries out the reaction a plastoquinone + NADH + (n+1) H(+)(in) = a plastoquinol + NAD(+) + n H(+)(out). It catalyses the reaction a plastoquinone + NADPH + (n+1) H(+)(in) = a plastoquinol + NADP(+) + n H(+)(out). This Draba nemorosa (Woodland whitlowgrass) protein is NAD(P)H-quinone oxidoreductase chain 4, chloroplastic.